Here is a 162-residue protein sequence, read N- to C-terminus: Small ribosomal subunit protein uS7m (162 aa).

This sequence belongs to the universal ribosomal protein uS7 family. In terms of assembly, part of the small ribosomal subunit.

The protein localises to the mitochondrion. Functionally, one of the primary rRNA binding proteins, it binds directly to 16S-like rRNA where it nucleates assembly of the head domain of the small subunit. The polypeptide is Small ribosomal subunit protein uS7m (mrps7) (Dictyostelium discoideum (Social amoeba)).